A 168-amino-acid polypeptide reads, in one-letter code: Ribulose bisphosphate carboxylase small subunit, chloroplastic (168 aa).

The N-terminal 28 residues, 1–28, are a transit peptide targeting the chloroplast; it reads MASIAAKSVSLRAATRRAAPVAAPADAR.

Belongs to the RuBisCO small chain family. Heterohexadecamer of 8 large and 8 small subunits.

It is found in the plastid. The protein localises to the chloroplast. Its function is as follows. RuBisCO catalyzes two reactions: the carboxylation of D-ribulose 1,5-bisphosphate, the primary event in carbon dioxide fixation, as well as the oxidative fragmentation of the pentose substrate. Both reactions occur simultaneously and in competition at the same active site. Although the small subunit is not catalytic it is essential for maximal activity. The protein is Ribulose bisphosphate carboxylase small subunit, chloroplastic of Chlamydomonas moewusii (Chlamydomonas eugametos).